A 101-amino-acid polypeptide reads, in one-letter code: Urease subunit beta (101 aa).

This sequence belongs to the urease beta subunit family. As to quaternary structure, heterotrimer of UreA (gamma), UreB (beta) and UreC (alpha) subunits. Three heterotrimers associate to form the active enzyme.

The protein resides in the cytoplasm. The catalysed reaction is urea + 2 H2O + H(+) = hydrogencarbonate + 2 NH4(+). It functions in the pathway nitrogen metabolism; urea degradation; CO(2) and NH(3) from urea (urease route): step 1/1. In Burkholderia ambifaria (strain MC40-6), this protein is Urease subunit beta.